The primary structure comprises 357 residues: MNAPTVLIMAGGTGGHIMPGLAVADVLRERGWRVLWLGNPDKMEGRLVPPRGIDLVPMHFQGVRGRGVAAMLKLPFLLLRACSQAWGHLTRVRPDVVLGMGGYVAFPGGMMAALRGLPLVVHEQNAVAGTANRWLARLARRVLSGFPDVLPRGEVLGNPVRRDVCALPGPADRYAGRTGPLRMLVVGGSLGAHALNTTLPRALALIDPQARPQVIHQAGAQHQQSLREAYAQAGVPADCRDFIEDMADAMGQADLLVCRAGAMTVAEVAAAGVAALFVPFPHAIDDHQTANARFLSDAQAAWLCPQGELTPEWLADWLRQRTRPELLAVAERARQHARPQAAADIADVCEQAARRPS.

UDP-N-acetyl-alpha-D-glucosamine-binding positions include 13–15 (TGG), N125, R161, S189, I243, and Q288.

The protein belongs to the glycosyltransferase 28 family. MurG subfamily.

The protein localises to the cell inner membrane. The catalysed reaction is di-trans,octa-cis-undecaprenyl diphospho-N-acetyl-alpha-D-muramoyl-L-alanyl-D-glutamyl-meso-2,6-diaminopimeloyl-D-alanyl-D-alanine + UDP-N-acetyl-alpha-D-glucosamine = di-trans,octa-cis-undecaprenyl diphospho-[N-acetyl-alpha-D-glucosaminyl-(1-&gt;4)]-N-acetyl-alpha-D-muramoyl-L-alanyl-D-glutamyl-meso-2,6-diaminopimeloyl-D-alanyl-D-alanine + UDP + H(+). Its pathway is cell wall biogenesis; peptidoglycan biosynthesis. In terms of biological role, cell wall formation. Catalyzes the transfer of a GlcNAc subunit on undecaprenyl-pyrophosphoryl-MurNAc-pentapeptide (lipid intermediate I) to form undecaprenyl-pyrophosphoryl-MurNAc-(pentapeptide)GlcNAc (lipid intermediate II). The protein is UDP-N-acetylglucosamine--N-acetylmuramyl-(pentapeptide) pyrophosphoryl-undecaprenol N-acetylglucosamine transferase of Bordetella petrii (strain ATCC BAA-461 / DSM 12804 / CCUG 43448).